Consider the following 172-residue polypeptide: Acetolactate synthase small subunit (172 aa).

An ACT domain is found at 4–78 (TLSVLVEDEA…NVIKVQDITE (75 aa)).

The protein belongs to the acetolactate synthase small subunit family. Dimer of large and small chains.

It carries out the reaction 2 pyruvate + H(+) = (2S)-2-acetolactate + CO2. Its pathway is amino-acid biosynthesis; L-isoleucine biosynthesis; L-isoleucine from 2-oxobutanoate: step 1/4. The protein operates within amino-acid biosynthesis; L-valine biosynthesis; L-valine from pyruvate: step 1/4. The polypeptide is Acetolactate synthase small subunit (ilvH) (Synechocystis sp. (strain ATCC 27184 / PCC 6803 / Kazusa)).